The following is a 425-amino-acid chain: tRNA(Ile)-lysidine synthase (425 aa).

27 to 32 contributes to the ATP binding site; it reads SGGLDS.

Belongs to the tRNA(Ile)-lysidine synthase family.

The protein localises to the cytoplasm. The catalysed reaction is cytidine(34) in tRNA(Ile2) + L-lysine + ATP = lysidine(34) in tRNA(Ile2) + AMP + diphosphate + H(+). Its function is as follows. Ligates lysine onto the cytidine present at position 34 of the AUA codon-specific tRNA(Ile) that contains the anticodon CAU, in an ATP-dependent manner. Cytidine is converted to lysidine, thus changing the amino acid specificity of the tRNA from methionine to isoleucine. The polypeptide is tRNA(Ile)-lysidine synthase (Streptococcus gordonii (strain Challis / ATCC 35105 / BCRC 15272 / CH1 / DL1 / V288)).